A 193-amino-acid polypeptide reads, in one-letter code: Adenine phosphoribosyltransferase (193 aa).

The protein belongs to the purine/pyrimidine phosphoribosyltransferase family. As to quaternary structure, homodimer.

The protein localises to the cytoplasm. It catalyses the reaction AMP + diphosphate = 5-phospho-alpha-D-ribose 1-diphosphate + adenine. Its pathway is purine metabolism; AMP biosynthesis via salvage pathway; AMP from adenine: step 1/1. Its function is as follows. Catalyzes a salvage reaction resulting in the formation of AMP, that is energically less costly than de novo synthesis. The polypeptide is Adenine phosphoribosyltransferase (Bifidobacterium adolescentis (strain ATCC 15703 / DSM 20083 / NCTC 11814 / E194a)).